A 204-amino-acid polypeptide reads, in one-letter code: FMN-dependent NADH:quinone oxidoreductase (204 aa).

Residues Ser10, 16–18 (SIS), and 96–99 (MYNF) contribute to the FMN site.

This sequence belongs to the azoreductase type 1 family. Homodimer. The cofactor is FMN.

It carries out the reaction 2 a quinone + NADH + H(+) = 2 a 1,4-benzosemiquinone + NAD(+). The enzyme catalyses N,N-dimethyl-1,4-phenylenediamine + anthranilate + 2 NAD(+) = 2-(4-dimethylaminophenyl)diazenylbenzoate + 2 NADH + 2 H(+). Functionally, quinone reductase that provides resistance to thiol-specific stress caused by electrophilic quinones. In terms of biological role, also exhibits azoreductase activity. Catalyzes the reductive cleavage of the azo bond in aromatic azo compounds to the corresponding amines. This Herminiimonas arsenicoxydans protein is FMN-dependent NADH:quinone oxidoreductase.